A 213-amino-acid chain; its full sequence is Thymidylate kinase (213 aa).

11-18 (GPDGAGKT) is an ATP binding site.

The protein belongs to the thymidylate kinase family.

It catalyses the reaction dTMP + ATP = dTDP + ADP. Functionally, phosphorylation of dTMP to form dTDP in both de novo and salvage pathways of dTTP synthesis. In Oenococcus oeni (strain ATCC BAA-331 / PSU-1), this protein is Thymidylate kinase.